The following is a 338-amino-acid chain: Protein pelota homolog (338 aa).

Belongs to the eukaryotic release factor 1 family. Pelota subfamily. As to quaternary structure, monomer. A divalent metal cation is required as a cofactor.

It localises to the cytoplasm. Its function is as follows. May function in recognizing stalled ribosomes, interact with stem-loop structures in stalled mRNA molecules, and effect endonucleolytic cleavage of the mRNA. May play a role in the release non-functional ribosomes and degradation of damaged mRNAs. Has endoribonuclease activity. This is Protein pelota homolog from Caldivirga maquilingensis (strain ATCC 700844 / DSM 13496 / JCM 10307 / IC-167).